Reading from the N-terminus, the 331-residue chain is Glutamyl-Q tRNA(Asp) synthetase (331 aa).

The segment covering 1–30 (MVQQAVIQRSANQQLSNQRSANQRATNQPT) has biased composition (polar residues). Positions 1–36 (MVQQAVIQRSANQQLSNQRSANQRATNQPTEYVGRF) are disordered. L-glutamate is bound by residues 35–39 (RFAPS) and Glu71. The 'HIGH' region signature appears at 38 to 48 (PSPSGDLHFGS). Cys127, Cys129, Tyr141, and Cys145 together coordinate Zn(2+). Tyr198 and Arg216 together coordinate L-glutamate. The short motif at 254 to 258 (KLSKQ) is the 'KMSKS' region element. Position 257 (Lys257) interacts with ATP.

This sequence belongs to the class-I aminoacyl-tRNA synthetase family. GluQ subfamily. Requires Zn(2+) as cofactor.

Its function is as follows. Catalyzes the tRNA-independent activation of glutamate in presence of ATP and the subsequent transfer of glutamate onto a tRNA(Asp). Glutamate is transferred on the 2-amino-5-(4,5-dihydroxy-2-cyclopenten-1-yl) moiety of the queuosine in the wobble position of the QUC anticodon. This Yersinia pseudotuberculosis serotype I (strain IP32953) protein is Glutamyl-Q tRNA(Asp) synthetase.